The sequence spans 142 residues: Hemoglobin A subunit alpha-1 (142 aa).

In terms of domain architecture, Globin spans 2–142 (VLTAGDKANV…VATALTSKYR (141 aa)). Histidine 59 serves as a coordination point for O2. Residue histidine 88 coordinates heme b.

It belongs to the globin family. Tetramer of alpha-1, alpha-2 and two identical beta chains. As to expression, red blood cells.

Its function is as follows. Involved in oxygen transport from the lung to the various peripheral tissues. The protein is Hemoglobin A subunit alpha-1 of Aldabrachelys gigantea (Aldabra giant tortoise).